Reading from the N-terminus, the 1369-residue chain is Microtubule-associated tumor suppressor candidate 2 (1369 aa).

Disordered regions lie at residues 180 to 262 (ASSS…TQTV), 374 to 442 (GRGN…FIPN), 477 to 509 (GENK…VAEN), 582 to 627 (NTSP…EERT), 791 to 839 (RSSA…LRPP), 861 to 992 (SSVS…QARE), and 1331 to 1369 (WKLQ…TTPR). Polar residues-rich tracts occupy residues 246 to 262 (PSTS…TQTV) and 392 to 401 (LHTTPKQGSA). Residues 641 to 980 (RPKIITYIRR…PKQRTAAARN (340 aa)) form a mediates interaction with MAPRE1 region. A sufficient for interaction with KIF2C region spans residues 801–890 (GPITTATSLY…TRSTFGNEEQ (90 aa)). The localization to the growing distal tip of microtubules stretch occupies residues 801–1150 (GPITTATSLY…HDAALLEMEN (350 aa)). Over residues 804-814 (TTATSLYSSDP) the composition is skewed to polar residues. A compositionally biased stretch (low complexity) spans 821-834 (ASSSNAAKSNLPKS). Residues 937-947 (TKKDAQKDQDT) are compositionally biased toward basic and acidic residues. Residues 991 to 1335 (REAERQLVLR…NEELLWKLQT (345 aa)) adopt a coiled-coil conformation. Over residues 1348-1369 (SPVYRGSSSGPSSPARVSTTPR) the composition is skewed to low complexity.

This sequence in the C-terminal section; belongs to the MTUS1 family. In terms of assembly, homodimer. Interacts with KIF2C and MAPRE1; the interaction is direct and probably targets MTUS2 and KIF2C to microtubules. Detected in embryonic stem cells differentiating to cardiomyocytes.

It localises to the cytoplasm. Its subcellular location is the cytoskeleton. In terms of biological role, binds microtubules. Together with MAPRE1 may target the microtubule depolymerase KIF2C to the plus-end of microtubules. May regulate the dynamics of microtubules at their growing distal tip. The chain is Microtubule-associated tumor suppressor candidate 2 (MTUS2) from Homo sapiens (Human).